The following is a 241-amino-acid chain: GTP cyclohydrolase 1 (241 aa).

A propeptide spanning residues 1-11 (MEKPRGVRCTN) is cleaved from the precursor. The disordered stretch occupies residues 1 to 58 (MEKPRGVRCTNGFPERELPRPGASRPAEKSRPPEAKGAQPADAWKAGRPRSEEDNELN). Phosphoserine occurs at positions 51 and 72. C132, H135, and C203 together coordinate Zn(2+).

The protein belongs to the GTP cyclohydrolase I family. Toroid-shaped homodecamer, composed of two pentamers of five dimers. Interacts with AHSA1 and GCHFR/GFRP. Post-translationally, phosphorylated.

It is found in the cytoplasm. It localises to the nucleus. It carries out the reaction GTP + H2O = 7,8-dihydroneopterin 3'-triphosphate + formate + H(+). The protein operates within cofactor biosynthesis; 7,8-dihydroneopterin triphosphate biosynthesis; 7,8-dihydroneopterin triphosphate from GTP: step 1/1. Its activity is regulated as follows. GTP shows a positive allosteric effect, and tetrahydrobiopterin inhibits the enzyme activity. Zinc is required for catalytic activity. Inhibited by Mg(2+). May positively regulate nitric oxide synthesis in endothelial cells. May be involved in dopamine synthesis. May modify pain sensitivity and persistence. In Rattus norvegicus (Rat), this protein is GTP cyclohydrolase 1 (Gch1).